Consider the following 179-residue polypeptide: Large ribosomal subunit protein uL5 (179 aa).

This sequence belongs to the universal ribosomal protein uL5 family. As to quaternary structure, part of the 50S ribosomal subunit; part of the 5S rRNA/L5/L18/L25 subcomplex. Contacts the 5S rRNA and the P site tRNA. Forms a bridge to the 30S subunit in the 70S ribosome.

Its function is as follows. This is one of the proteins that bind and probably mediate the attachment of the 5S RNA into the large ribosomal subunit, where it forms part of the central protuberance. In the 70S ribosome it contacts protein S13 of the 30S subunit (bridge B1b), connecting the 2 subunits; this bridge is implicated in subunit movement. Contacts the P site tRNA; the 5S rRNA and some of its associated proteins might help stabilize positioning of ribosome-bound tRNAs. This Geobacillus kaustophilus (strain HTA426) protein is Large ribosomal subunit protein uL5.